Consider the following 408-residue polypeptide: Bone morphogenetic protein 4 (408 aa).

Positions 1–19 are cleaved as a signal peptide; it reads MIPGNRMLMVVLLCQVLLG. Positions 20–292 are excised as a propeptide; sequence GASHASLIPE…HTLTRRRAKR (273 aa). The residue at position 91 (Ser-91) is a Phosphoserine. The interval 91–111 is disordered; the sequence is SGEEEEEEQSQGTGLEYPERP. 2 N-linked (GlcNAc...) asparagine glycosylation sites follow: Asn-144 and Asn-209. The disordered stretch occupies residues 281 to 307; that stretch reads RGHTLTRRRAKRSPKHHPQRSRKKNKN. Basic residues predominate over residues 284 to 307; the sequence is TLTRRRAKRSPKHHPQRSRKKNKN. 3 cysteine pairs are disulfide-bonded: Cys-308/Cys-373, Cys-337/Cys-405, and Cys-341/Cys-407. N-linked (GlcNAc...) asparagine glycosylation is found at Asn-350 and Asn-365.

The protein belongs to the TGF-beta family. As to quaternary structure, homodimer; disulfide-linked. Interacts with SOSTDC1, GREM2, RGMA, RGMB and RGMC. Part of a complex consisting of TWSG1 and CHRD. Interacts with the serine proteases, HTRA1 and HTRA3; the interaction with either inhibits BMP4-mediated signaling. The HTRA protease activity is required for this inhibition. Interacts with FBN1 (via N-terminal domain) and FBN2. Interacts with type I receptor BMPR1A. Interacts with type II receptor BMPR2. Interacts with FSTL1; this interaction inhibits the activation of the BMP4/Smad1/5/8 signaling pathway. Interacts with SCUBE3. Interacts with TGFBR3. As to expression, in the cochlea, detected in nonprosensory regions and outer sulcus (at protein level). Prior to gastrulation, expressed in the extraembryonic ectoderm. Later, expressed in the extraembryonic mesoderm.

The protein resides in the secreted. Its subcellular location is the extracellular space. It is found in the extracellular matrix. Its function is as follows. Growth factor of the TGF-beta superfamily that plays essential roles in many developmental processes, including neurogenesis, vascular development, angiogenesis and osteogenesis. Acts in concert with PTHLH/PTHRP to stimulate ductal outgrowth during embryonic mammary development and to inhibit hair follicle induction. Initiates the canonical BMP signaling cascade by associating with type I receptor BMPR1A and type II receptor BMPR2. Once all three components are bound together in a complex at the cell surface, BMPR2 phosphorylates and activates BMPR1A. In turn, BMPR1A propagates signal by phosphorylating SMAD1/5/8 that travel to the nucleus and act as activators and repressors of transcription of target genes. Positively regulates the expression of odontogenic development regulator MSX1 via inducing the IPO7-mediated import of SMAD1 to the nucleus. Required for MSX1-mediated mesenchymal molar tooth bud development beyond the bud stage, via promoting Wnt signaling. Acts as a positive regulator of odontoblast differentiation during mesenchymal tooth germ formation, expression is repressed during the bell stage by MSX1-mediated inhibition of CTNNB1 signaling. Able to induce its own expression in dental mesenchymal cells and also in the neighboring dental epithelial cells via an MSX1-mediated pathway. Can also signal through non-canonical BMP pathways such as ERK/MAP kinase, PI3K/Akt or SRC cascades. For example, induces SRC phosphorylation which, in turn, activates VEGFR2, leading to an angiogenic response. This Mus musculus (Mouse) protein is Bone morphogenetic protein 4.